We begin with the raw amino-acid sequence, 221 residues long: Ependymin (221 aa).

A signal peptide spans 1–21; sequence MQAFAVAALSIWLCLGATTLA. Residues Asn37, Asn77, and Asn101 are each glycosylated (N-linked (GlcNAc...) asparagine).

This sequence belongs to the ependymin family. Forms disulfide-linked dimers. Binds calcium through the terminal sialic acids. As to expression, EPDs are synthesized in the meninx and secreted in the cerebrospinal fluid.

It localises to the secreted. In terms of biological role, may play a role in neural plasticity. May be involved during axon regeneration. This Esox lucius (Northern pike) protein is Ependymin (epd).